Consider the following 448-residue polypeptide: UDP-glycosyltransferase 79B5 (448 aa).

UDP-alpha-D-glucose is bound by residues Thr-261, 320 to 322 (LEQ), 337 to 345 (HCGFGSMWE), and 359 to 362 (LADQ).

This sequence belongs to the UDP-glycosyltransferase family.

The polypeptide is UDP-glycosyltransferase 79B5 (UGT79B5) (Arabidopsis thaliana (Mouse-ear cress)).